The sequence spans 2967 residues: BEACH domain-containing protein lvsD (2967 aa).

10 disordered regions span residues M1–G25, N322–S364, I588–L615, N917–N936, G1077–D1105, N1173–R1220, N1583–N1613, Q1831–V1859, P1921–N2009, and K2029–N2062. One can recognise a BEACH 1 domain in the interval M229 to Y491. Low complexity predominate over residues S1079 to N1092. Residues N1093–D1105 show a composition bias toward basic and acidic residues. 6 stretches are compositionally biased toward low complexity: residues P1185–S1194, N1583–N1611, Q1831–S1857, Q1926–N1980, N1993–T2006, and S2034–N2062. The BEACH-type PH domain occupies N2060–G2162. BEACH domains follow at residues T2202 to R2492 and N2628 to N2785. WD repeat units follow at residues N2658 to H2710 and G2720 to Q2761. Disordered regions lie at residues S2798–T2820 and P2915–N2934. Low complexity-rich tracts occupy residues S2811–T2820 and N2924–N2934.

This is BEACH domain-containing protein lvsD (lvsD) from Dictyostelium discoideum (Social amoeba).